Here is a 286-residue protein sequence, read N- to C-terminus: Hydroxysteroid 11-beta-dehydrogenase 1-like protein (286 aa).

The first 17 residues, 1–17 (MGIHIKRWCFIILVASA), serve as a signal peptide directing secretion. NADP(+)-binding positions include 39–65 (GASTGIGEEIAYHYARAGAKLVLTARR), 90–91 (DM), and 117–119 (NHI). Residue Ser-168 coordinates substrate. Residue Tyr-181 is the Proton acceptor of the active site. NADP(+) contacts are provided by residues 181–185 (YAASK) and 214–220 (GLIDTQS).

It belongs to the short-chain dehydrogenases/reductases (SDR) family.

The protein localises to the secreted. The catalysed reaction is cortisone + NADPH + H(+) = cortisol + NADP(+). In terms of biological role, unidirectional NADP(+)-dependent cortisol dehydrogenase (in vitro). This chain is Hydroxysteroid 11-beta-dehydrogenase 1-like protein (hsd11b1l), found in Xenopus tropicalis (Western clawed frog).